A 558-amino-acid polypeptide reads, in one-letter code: 2-hydroxy-7-methoxy-5-methyl-1-naphthoate--CoA ligase (558 aa).

Residues 212–213 (GG), 329–331 (ASR), Val-351, Asp-435, Arg-450, and Lys-542 contribute to the ATP site.

The protein belongs to the ATP-dependent AMP-binding enzyme family.

It carries out the reaction 2-hydroxy-7-methoxy-5-methyl-1-naphthoate + ATP + CoA = 2-hydroxy-7-methoxy-5-methyl-1-naphthoyl-CoA + AMP + diphosphate. It functions in the pathway antibiotic biosynthesis. In terms of biological role, catalyzes the activation of 2-hydroxy-7-methoxy-5-methyl-1-naphthoate in the biosynthesis of the naphthoate moiety of the neocarzinostatin chromophore. Also catalyzes the activation of other 1-naphthoic acid analogs such as 2-hydroxy-5-methyl-1-naphthoate or 2,7-dihydroxy-5-methyl-1-naphthoate in vitro. The chain is 2-hydroxy-7-methoxy-5-methyl-1-naphthoate--CoA ligase from Streptomyces carzinostaticus.